The chain runs to 163 residues: 6,7-dimethyl-8-ribityllumazine synthase 1 (163 aa).

5-amino-6-(D-ribitylamino)uracil-binding positions include Phe27, 58–60, and 87–89; these read ALE and CVV. (2S)-2-hydroxy-3-oxobutyl phosphate is bound at residue 92 to 93; it reads ET. The Proton donor role is filled by His95. Asn120 lines the 5-amino-6-(D-ribitylamino)uracil pocket. Arg134 is a (2S)-2-hydroxy-3-oxobutyl phosphate binding site.

It belongs to the DMRL synthase family.

It catalyses the reaction (2S)-2-hydroxy-3-oxobutyl phosphate + 5-amino-6-(D-ribitylamino)uracil = 6,7-dimethyl-8-(1-D-ribityl)lumazine + phosphate + 2 H2O + H(+). It functions in the pathway cofactor biosynthesis; riboflavin biosynthesis; riboflavin from 2-hydroxy-3-oxobutyl phosphate and 5-amino-6-(D-ribitylamino)uracil: step 1/2. Catalyzes the formation of 6,7-dimethyl-8-ribityllumazine by condensation of 5-amino-6-(D-ribitylamino)uracil with 3,4-dihydroxy-2-butanone 4-phosphate. This is the penultimate step in the biosynthesis of riboflavin. This Rhodopseudomonas palustris (strain ATCC BAA-98 / CGA009) protein is 6,7-dimethyl-8-ribityllumazine synthase 1.